The chain runs to 268 residues: Ubiquinone biosynthesis protein COQ4 homolog, mitochondrial (268 aa).

Zn(2+)-binding residues include H171, D172, H175, and E187.

The protein belongs to the COQ4 family. In terms of assembly, component of a multi-subunit COQ enzyme complex. Zn(2+) is required as a cofactor.

The protein localises to the mitochondrion inner membrane. It catalyses the reaction a 4-hydroxy-3-methoxy-5-(all-trans-polyprenyl)benzoate + H(+) = a 2-methoxy-6-(all-trans-polyprenyl)phenol + CO2. Its pathway is cofactor biosynthesis; ubiquinone biosynthesis. In terms of biological role, lyase that catalyzes the C1-decarboxylation of 4-hydroxy-3-methoxy-5-(all-trans-polyprenyl)benzoic acid into 2-methoxy-6-(all-trans-polyprenyl)phenol during ubiquinone biosynthesis. The protein is Ubiquinone biosynthesis protein COQ4 homolog, mitochondrial of Drosophila yakuba (Fruit fly).